The following is a 459-amino-acid chain: SLIT-ROBO Rho GTPase-activating protein 2C (459 aa).

An F-BAR domain is found at 22 to 325 (KEIRAQLTEQ…AVENLDATSD (304 aa)). The segment covering 181–202 (LKEAEKQEEKQIGKSVKQEDRQ) has biased composition (basic and acidic residues). A disordered region spans residues 181 to 211 (LKEAEKQEEKQIGKSVKQEDRQTPCSPDSTA). Positions 363 to 401 (QSELVQRCQQLQSRLSTLKIENEEVKKTMEATLQTIQDI) form a coiled coil.

Homodimer. Interacts (via F-BAR domain) with SRGAP2/SRGAP2A (via F-BAR domain); formation of the heterodimer inhibits SRGAP2/SRGAP2A function. As to expression, ubiquitously expressed with higher expression in cerebellum. Probably expressed in fetal and adult neurons (at protein level).

Its function is as follows. Human-specific protein that acts as a key modifier of cortical connectivity in the human brain. Acts by inhibiting the functions of ancestral paralog SRGAP2/SRGAP2A, a postsynaptic protein that regulates excitatory and inhibitory synapse maturation and density in cortical pyramidal neurons. SRGAP2C is unstable but is able to heterodimerize with SRGAP2/SRGAP2A, thereby reducing SRGAP2/SRGAP2A levels through proteasome-dependent degradation. Inhibition of SRGAP2/SRGAP2A by SRGAP2C leads to an increase in synaptic density and protracted synaptic maturation of both excitatory and inhibitory synapses. Modifies cortical circuit connectivity by increasing the number of local and long-range cortical inputs received by layer 2/3 pyramidal neurons. Also able to increase the probability of sensory-evoked responses by layer 2/3 pyramidal neurons. This chain is SLIT-ROBO Rho GTPase-activating protein 2C, found in Homo sapiens (Human).